The primary structure comprises 75 residues: Anionic peptide (75 aa).

The N-terminal stretch at 1–24 (MVSKSLIVLLLVSVLVSTFYTSEA) is a signal peptide.

It belongs to the non-disulfide-bridged peptide (NDBP) superfamily. Expressed by the venom gland.

The protein localises to the secreted. This Tityus discrepans (Venezuelan scorpion) protein is Anionic peptide.